The primary structure comprises 341 residues: Type II methyltransferase M.NgoPII (341 aa).

Residues Met12–Arg341 form the SAM-dependent MTase C5-type domain. Cys84 is an active-site residue.

Belongs to the class I-like SAM-binding methyltransferase superfamily. C5-methyltransferase family.

The enzyme catalyses a 2'-deoxycytidine in DNA + S-adenosyl-L-methionine = a 5-methyl-2'-deoxycytidine in DNA + S-adenosyl-L-homocysteine + H(+). A methylase that recognizes the double-stranded sequence 5'-GGCC-3', methylates C-3 on both strands, and protects the DNA from cleavage by the NgoPII endonuclease. The sequence is that of Type II methyltransferase M.NgoPII (ngoPIIM) from Neisseria gonorrhoeae.